The primary structure comprises 399 residues: Integral membrane protein GPR137B (399 aa).

Positions 1–22 (MRPERPRPRGSAPGPMETPPWD) are disordered. Over 1–46 (MRPERPRPRGSAPGPMETPPWDPARNDSLPPTLTPAVPPYVKLGLT) the chain is Lumenal. Asparagine 26 carries an N-linked (GlcNAc...) asparagine glycan. A helical membrane pass occupies residues 47-67 (VVYTVFYALLFVFIYVQLWLV). Topologically, residues 68–79 (LRYRHKRLSYQS) are cytoplasmic. A helical transmembrane segment spans residues 80–100 (VFLFLCLFWASLRTVLFSFYF). Residues 101–111 (KDFVAANSLSP) are Lumenal-facing. The chain crosses the membrane as a helical span at residues 112-132 (FVFWLLYCFPVCLQFFTLTLM). At 133-159 (NLYFTQVIFKAKSKYSPELLKYRLPLY) the chain is on the cytoplasmic side. A helical transmembrane segment spans residues 160-180 (LASLFISLVFLLVNLTCAVLV). The Lumenal portion of the chain corresponds to 181 to 188 (KTGNWERK). A helical membrane pass occupies residues 189 to 209 (VIVSVRVAINDTLFVLCAVSL). At 210–237 (SICLYKISKMSLANIYLESKGSSVCQVT) the chain is on the cytoplasmic side. Residues 238-258 (AIGVTVILLYTSRACYNLFIL) traverse the membrane as a helical segment. The Lumenal segment spans residues 259 to 292 (SFSQNKSVHSFDYDWYNVSDQADLKNQLGDAGYV). Asparagine 263 and asparagine 275 each carry an N-linked (GlcNAc...) asparagine glycan. A helical membrane pass occupies residues 293–313 (LFGVVLFVWELLPTTLVVYFF). At 314–399 (RVRNPTKDLT…TLDPDKPSLG (86 aa)) the chain is on the cytoplasmic side.

This sequence belongs to the GPR137 family. In terms of assembly, interaction with RRAGA; increases RRAGA recruitment to lysosomes. Interacts with MTOR; this interaction is amino acid sensitive. Expressed in kidney, heart, brain and placenta.

The protein localises to the lysosome membrane. Its function is as follows. Lysosomal integral membrane protein that regulates the localization and activity of mTORC1, a signaling complex promoting cell growth in response to growth factors, energy levels, and amino acids. Interacts with Rag GTPases and increases the lysosomial localization and activity of Rag GTPases and thereby regulates mTORC1 translocation and activity in lysosome. Involved in the regulation of lysosomal morphology and autophagy. Also acts as a negative regulator of osteoclast activity. Involved in interleukin-4-induced M2 macrophage polarization. The chain is Integral membrane protein GPR137B (GPR137B) from Homo sapiens (Human).